The sequence spans 161 residues: Lipoprotein signal peptidase (161 aa).

Helical transmembrane passes span 11–31 (PLFW…KLWV), 44–64 (LWSG…FSAF), 66–86 (GGAG…IIFA), and 100–120 (GCIL…GHVI). Catalysis depends on residues D121 and D137. A helical transmembrane segment spans residues 135–155 (LADVSINIGIAALLWASFFPV).

It belongs to the peptidase A8 family.

It is found in the cell inner membrane. The catalysed reaction is Release of signal peptides from bacterial membrane prolipoproteins. Hydrolyzes -Xaa-Yaa-Zaa-|-(S,diacylglyceryl)Cys-, in which Xaa is hydrophobic (preferably Leu), and Yaa (Ala or Ser) and Zaa (Gly or Ala) have small, neutral side chains.. The protein operates within protein modification; lipoprotein biosynthesis (signal peptide cleavage). In terms of biological role, this protein specifically catalyzes the removal of signal peptides from prolipoproteins. In Synechocystis sp. (strain ATCC 27184 / PCC 6803 / Kazusa), this protein is Lipoprotein signal peptidase.